We begin with the raw amino-acid sequence, 126 residues long: Holo-[acyl-carrier-protein] synthase (126 aa).

The Mg(2+) site is built by Asp9 and Glu58.

It belongs to the P-Pant transferase superfamily. AcpS family. The cofactor is Mg(2+).

The protein localises to the cytoplasm. It carries out the reaction apo-[ACP] + CoA = holo-[ACP] + adenosine 3',5'-bisphosphate + H(+). Functionally, transfers the 4'-phosphopantetheine moiety from coenzyme A to a Ser of acyl-carrier-protein. The polypeptide is Holo-[acyl-carrier-protein] synthase (Aliivibrio salmonicida (strain LFI1238) (Vibrio salmonicida (strain LFI1238))).